The primary structure comprises 232 residues: Orotidine 5'-phosphate decarboxylase (232 aa).

Residues D11, K33, 60–69 (DLKLYDIPNT), T119, R180, Q189, G209, and R210 contribute to the substrate site. K62 acts as the Proton donor in catalysis.

Belongs to the OMP decarboxylase family. Type 1 subfamily. As to quaternary structure, homodimer.

The enzyme catalyses orotidine 5'-phosphate + H(+) = UMP + CO2. It participates in pyrimidine metabolism; UMP biosynthesis via de novo pathway; UMP from orotate: step 2/2. Functionally, catalyzes the decarboxylation of orotidine 5'-monophosphate (OMP) to uridine 5'-monophosphate (UMP). The chain is Orotidine 5'-phosphate decarboxylase from Wigglesworthia glossinidia brevipalpis.